A 229-amino-acid polypeptide reads, in one-letter code: Triosephosphate isomerase (229 aa).

6–8 (NLK) serves as a coordination point for substrate. Catalysis depends on His85, which acts as the Electrophile. The Proton acceptor role is filled by Glu152. The substrate site is built by Gly158 and Ser188.

This sequence belongs to the triosephosphate isomerase family. Homodimer.

The protein localises to the cytoplasm. It carries out the reaction D-glyceraldehyde 3-phosphate = dihydroxyacetone phosphate. It participates in carbohydrate biosynthesis; gluconeogenesis. Its pathway is carbohydrate degradation; glycolysis; D-glyceraldehyde 3-phosphate from glycerone phosphate: step 1/1. Involved in the gluconeogenesis. Catalyzes stereospecifically the conversion of dihydroxyacetone phosphate (DHAP) to D-glyceraldehyde-3-phosphate (G3P). This is Triosephosphate isomerase from Campylobacter curvus (strain 525.92).